The sequence spans 393 residues: Zinc finger CCCH domain-containing protein 2 (393 aa).

The segment at Met1–Asp71 is disordered. Positions Arg20–Arg37 are enriched in low complexity. The segment covering Asp60–Cys69 has biased composition (basic and acidic residues). C3H1-type zinc fingers lie at residues Gln122–Phe150 and Tyr159–Pro181.

Interacts with MARD1/FLZ9 and RD21A. Specifically expressed in seeds.

It is found in the nucleus. In terms of biological role, probable transcription repressor that functions as a negative regulator of phytochrome-mediated promotion of seed germination. Inhibits seed germination by regulating the expression of gibberellic acid (GA) and abscisic acid (ABA) metabolic genes. Does not regulate the expression of the DELLA genes RGA and RGA1. Activated by PIL5, a phytochrome-interacting basic helix-loop-helix transcription factor. Represses directly JMJ20 and JMJ22 expression in the absence of red light (R) and in far-red (FR) conditions. This chain is Zinc finger CCCH domain-containing protein 2, found in Arabidopsis thaliana (Mouse-ear cress).